An 886-amino-acid polypeptide reads, in one-letter code: Alanine--tRNA ligase (886 aa).

The Zn(2+) site is built by His-568, His-572, Cys-670, and His-674.

This sequence belongs to the class-II aminoacyl-tRNA synthetase family. The cofactor is Zn(2+).

It localises to the cytoplasm. The catalysed reaction is tRNA(Ala) + L-alanine + ATP = L-alanyl-tRNA(Ala) + AMP + diphosphate. Functionally, catalyzes the attachment of alanine to tRNA(Ala) in a two-step reaction: alanine is first activated by ATP to form Ala-AMP and then transferred to the acceptor end of tRNA(Ala). Also edits incorrectly charged Ser-tRNA(Ala) and Gly-tRNA(Ala) via its editing domain. The chain is Alanine--tRNA ligase from Prochlorococcus marinus (strain NATL1A).